The sequence spans 266 residues: Hemin import ATP-binding protein HmuV (266 aa).

Residues Leu12–Asp248 enclose the ABC transporter domain. Gly44–Ser51 lines the ATP pocket.

The protein belongs to the ABC transporter superfamily. Heme (hemin) importer (TC 3.A.1.14.5) family. The complex is composed of two ATP-binding proteins (HmuV), two transmembrane proteins (HmuU) and a solute-binding protein (HmuT).

The protein localises to the cell inner membrane. Part of the ABC transporter complex HmuTUV involved in hemin import. Responsible for energy coupling to the transport system. The polypeptide is Hemin import ATP-binding protein HmuV (Yersinia enterocolitica).